We begin with the raw amino-acid sequence, 88 residues long: Defensin-like protein 24 (88 aa).

A signal peptide spans 1–23 (MASSKFVLFAILALSLLLSGTEA). Cystine bridges form between Cys37–Cys87, Cys47–Cys72, Cys56–Cys83, and Cys60–Cys85.

This sequence belongs to the DEFL family.

It is found in the secreted. The protein is Defensin-like protein 24 of Arabidopsis thaliana (Mouse-ear cress).